Reading from the N-terminus, the 276-residue chain is Fructoselysine 3-epimerase (276 aa).

E148 (proton donor/acceptor) is an active-site residue. A divalent metal cation is bound by residues E148, D181, H207, and E247. E247 (proton donor/acceptor) is an active-site residue.

Belongs to the FrlC family. Homooctamer. Requires a divalent metal cation as cofactor.

It carries out the reaction N(6)-(D-psicosyl)-L-lysine = N(6)-(D-fructosyl)-L-lysine. Functionally, catalyzes the reversible interconversion of fructoselysine with its C-3 epimer, psicoselysine. May allow S.flexneri to utilize psicoselysine for growth. This is Fructoselysine 3-epimerase (frlC) from Shigella flexneri.